A 253-amino-acid chain; its full sequence is Hydroxyacylglutathione hydrolase (253 aa).

Residues H59, H61, D63, H64, H118, D143, and H181 each contribute to the Zn(2+) site.

The protein belongs to the metallo-beta-lactamase superfamily. Glyoxalase II family. As to quaternary structure, monomer. Zn(2+) serves as cofactor.

It carries out the reaction an S-(2-hydroxyacyl)glutathione + H2O = a 2-hydroxy carboxylate + glutathione + H(+). It functions in the pathway secondary metabolite metabolism; methylglyoxal degradation; (R)-lactate from methylglyoxal: step 2/2. Thiolesterase that catalyzes the hydrolysis of S-D-lactoyl-glutathione to form glutathione and D-lactic acid. In Prochlorococcus marinus (strain MIT 9211), this protein is Hydroxyacylglutathione hydrolase.